The primary structure comprises 510 residues: Leucine-rich repeat-containing protein 14B (510 aa).

One copy of the LRR 1; degenerate repeat lies at 100–137 (SNRLRVADFTGIQDVQVQQCPCGRALGRWGRTKVLART). One copy of the LRR 2; degenerate repeat lies at 181 to 205 (QVCCPSLRADSLSPGQLLQVLGLAG). Residues 234 to 273 (FPQLTSLTLPTKAFDAPPTCAPDPEGEDLLLTSIAWELSQ) form an LRR 4; degenerate repeat. 5 LRR repeats span residues 274–298 (MNQL…LSPL), 299–330 (KTPL…AHLE), 331–349 (VLDL…TFFR), 355–382 (AQTL…GLSP), and 383–407 (CSQL…LFAA).

This sequence belongs to the PRAME family. LRRC14 subfamily.

This is Leucine-rich repeat-containing protein 14B from Mus musculus (Mouse).